Here is a 1191-residue protein sequence, read N- to C-terminus: Puratrophin-1 (1191 aa).

Disordered regions lie at residues 1 to 152 (MERP…DPVG) and 707 to 728 (AGGG…SDPR). Ser-64 carries the post-translational modification Phosphoserine. Polar residues predominate over residues 111–120 (SHLSLAQGES). A DH domain is found at 732–908 (RLQLVLAEMV…HFQLRHGNDL (177 aa)). A PH domain is found at 920-1027 (NLKEQGQLVR…WTADISHLLW (108 aa)). The segment at 1150–1176 (SLTAEDSEISSQCPSASGSSGSDSSCV) is disordered. Positions 1159–1176 (SSQCPSASGSSGSDSSCV) are enriched in low complexity.

As to expression, expressed in kidney, Leydig cells in the testis, epithelial cells in the prostate gland and Langerhans islet in the pancreas. Isoform 1 and isoform 3 are strongly expressed in Purkinje cells and to a lower extent in other neurons (at protein level). Widely expressed at low levels. More strongly expressed in testis and pancreas.

Possible role in intracellular signaling and cytoskeleton dynamics at the Golgi. The sequence is that of Puratrophin-1 (PLEKHG4) from Homo sapiens (Human).